Reading from the N-terminus, the 142-residue chain is 3-hydroxyacyl-[acyl-carrier-protein] dehydratase FabZ (142 aa).

The active site involves histidine 47.

Belongs to the thioester dehydratase family. FabZ subfamily.

The protein resides in the cytoplasm. The catalysed reaction is a (3R)-hydroxyacyl-[ACP] = a (2E)-enoyl-[ACP] + H2O. Functionally, involved in unsaturated fatty acids biosynthesis. Catalyzes the dehydration of short chain beta-hydroxyacyl-ACPs and long chain saturated and unsaturated beta-hydroxyacyl-ACPs. The polypeptide is 3-hydroxyacyl-[acyl-carrier-protein] dehydratase FabZ (Coxiella burnetii (strain RSA 331 / Henzerling II)).